Here is a 146-residue protein sequence, read N- to C-terminus: Hut operon positive regulatory protein (146 aa).

It belongs to the HutP family. Homohexamer.

In terms of biological role, antiterminator that binds to cis-acting regulatory sequences on the mRNA in the presence of histidine, thereby suppressing transcription termination and activating the hut operon for histidine utilization. This is Hut operon positive regulatory protein from Bacillus anthracis (strain CDC 684 / NRRL 3495).